Consider the following 456-residue polypeptide: Phosphomethylpyrimidine synthase (456 aa).

Substrate-binding positions include asparagine 80, methionine 109, tyrosine 139, histidine 175, serine 195 to glycine 197, aspartate 236 to arginine 239, and glutamate 275. Histidine 279 provides a ligand contact to Zn(2+). Tyrosine 302 is a binding site for substrate. Zn(2+) is bound at residue histidine 343. Residues cysteine 423, cysteine 426, and cysteine 431 each coordinate [4Fe-4S] cluster.

This sequence belongs to the ThiC family. [4Fe-4S] cluster serves as cofactor.

The enzyme catalyses 5-amino-1-(5-phospho-beta-D-ribosyl)imidazole + S-adenosyl-L-methionine = 4-amino-2-methyl-5-(phosphooxymethyl)pyrimidine + CO + 5'-deoxyadenosine + formate + L-methionine + 3 H(+). The protein operates within cofactor biosynthesis; thiamine diphosphate biosynthesis. In terms of biological role, catalyzes the synthesis of the hydroxymethylpyrimidine phosphate (HMP-P) moiety of thiamine from aminoimidazole ribotide (AIR) in a radical S-adenosyl-L-methionine (SAM)-dependent reaction. This chain is Phosphomethylpyrimidine synthase, found in Prochlorococcus marinus (strain AS9601).